The sequence spans 517 residues: Perilipin-1 (517 aa).

Ser-81 carries the phosphoserine modification. Residue Thr-85 is modified to Phosphothreonine. Residues Ser-126, Ser-130, Ser-132, Ser-137, and Ser-174 each carry the phosphoserine modification. Positions 195 to 216 are disordered; sequence DKESAPSSGRQRTQKAPKAKPS. Thr-223, Thr-298, and Thr-300 each carry phosphothreonine. Positions 286 to 320 are disordered; that stretch reads LAASQDESHDDQTDTEGEETDDEEEEEESEAEENV. Residues 290–321 are required for interaction with CIDEC; that stretch reads QDESHDDQTDTEGEETDDEEEEEESEAEENVL. The span at 298–318 shows a compositional bias: acidic residues; that stretch reads TDTEGEETDDEEEEEESEAEE. Phosphoserine is present on residues Ser-314, Ser-384, Ser-386, Ser-410, Ser-433, Ser-439, Ser-460, Ser-492, and Ser-494. The interval 425 to 490 is disordered; sequence SAEAERKGSG…AMPREKPARR (66 aa).

Belongs to the perilipin family. Interacts with ABHD5. Interacts with CIDEC. Interacts with AQP7. Post-translationally, major cAMP-dependent protein kinase-substrate in adipocytes, also dephosphorylated by PP1. When phosphorylated, may be maximally sensitive to HSL and when unphosphorylated, may play a role in the inhibition of lipolysis, by acting as a barrier in lipid droplet.

The protein localises to the endoplasmic reticulum. The protein resides in the lipid droplet. In terms of biological role, modulator of adipocyte lipid metabolism. Coats lipid storage droplets to protect them from breakdown by hormone-sensitive lipase (HSL). Its absence may result in leanness. Plays a role in unilocular lipid droplet formation by activating CIDEC. Their interaction promotes lipid droplet enlargement and directional net neutral lipid transfer. May modulate lipolysis and triglyceride levels. The polypeptide is Perilipin-1 (Plin1) (Mus musculus (Mouse)).